The sequence spans 683 residues: DNA-directed RNA polymerase subunit beta' (683 aa).

The Zn(2+) site is built by Cys69, Cys71, Cys87, and Cys90. Mg(2+) is bound by residues Asp492, Asp494, and Asp496.

It belongs to the RNA polymerase beta' chain family. RpoC1 subfamily. In plastids the minimal PEP RNA polymerase catalytic core is composed of four subunits: alpha, beta, beta', and beta''. When a (nuclear-encoded) sigma factor is associated with the core the holoenzyme is formed, which can initiate transcription. The cofactor is Mg(2+). Zn(2+) is required as a cofactor.

The protein resides in the plastid. The protein localises to the chloroplast. It carries out the reaction RNA(n) + a ribonucleoside 5'-triphosphate = RNA(n+1) + diphosphate. In terms of biological role, DNA-dependent RNA polymerase catalyzes the transcription of DNA into RNA using the four ribonucleoside triphosphates as substrates. The chain is DNA-directed RNA polymerase subunit beta' from Coffea arabica (Arabian coffee).